Here is a 104-residue protein sequence, read N- to C-terminus: Transcription elongation factor A protein-like 9 (104 aa).

The span at methionine 1–glutamate 27 shows a compositional bias: basic and acidic residues. The tract at residues methionine 1 to threonine 44 is disordered.

The protein belongs to the TFS-II family. TFA subfamily.

The protein localises to the nucleus. In terms of biological role, may be involved in transcriptional regulation. This is Transcription elongation factor A protein-like 9 from Homo sapiens (Human).